The chain runs to 1187 residues: DNA-directed RNA polymerase subunit beta (1187 aa).

The segment at 1150 to 1187 (KDEDDDPASSADDLGFNIGARPDAAAKEDQKAEEPEYQ) is disordered. The segment covering 1173-1187 (AAAKEDQKAEEPEYQ) has biased composition (basic and acidic residues).

The protein belongs to the RNA polymerase beta chain family. As to quaternary structure, the RNAP catalytic core consists of 2 alpha, 1 beta, 1 beta' and 1 omega subunit. When a sigma factor is associated with the core the holoenzyme is formed, which can initiate transcription.

The enzyme catalyses RNA(n) + a ribonucleoside 5'-triphosphate = RNA(n+1) + diphosphate. Functionally, DNA-dependent RNA polymerase catalyzes the transcription of DNA into RNA using the four ribonucleoside triphosphates as substrates. The sequence is that of DNA-directed RNA polymerase subunit beta from Bifidobacterium longum subsp. infantis (strain ATCC 15697 / DSM 20088 / JCM 1222 / NCTC 11817 / S12).